The sequence spans 400 residues: Selection and upkeep of intraepithelial T-cells protein 2 (400 aa).

An N-terminal signal peptide occupies residues 1–21; the sequence is MGATGVLLCVVLHFLQMVTQS. Residues 22 to 240 lie on the Extracellular side of the membrane; it reads SEKFTVTGLQ…LSGELFSWKR (219 aa). One can recognise an Ig-like V-type domain in the interval 23–133; it reads EKFTVTGLQR…VGEFYEEHIT (111 aa). Intrachain disulfides connect Cys-46–Cys-120 and Cys-160–Cys-214. The region spanning 139–225 is the Ig-like C1-type domain; the sequence is ATSSVMYILM…LQNLLTHQEE (87 aa). A glycan (N-linked (GlcNAc...) asparagine) is linked at Asn-197. The helical transmembrane segment at 241–261 threads the bilayer; sequence VWIMILTTIGFMMIAFCMTYC. Topologically, residues 262–280 are cytoplasmic; sequence VQQHLLYGTFSKGKCHWLK. The helical transmembrane segment at 281–301 threads the bilayer; sequence STMIFMFSVIAVTGVMLILHL. The Extracellular segment spans residues 302–321; that stretch reads KQRVPVSDQHFELDTLWLED. A helical membrane pass occupies residues 322 to 342; sequence ISVILCVLIVFIIKLISFIYF. Residues 343-400 lie on the Cytoplasmic side of the membrane; that stretch reads RLEGDHQGWSLPPYLSATPTAAICRLAVPEYSRGHLQLDSEDDLAGMGPSPFFITPCF.

This sequence belongs to the SKINT family. Expressed in skin, thymus and mammary gland.

Its subcellular location is the membrane. Its function is as follows. May act by engaging a cell surface molecule on immature T-cells in the embryonic thymus. This Mus musculus (Mouse) protein is Selection and upkeep of intraepithelial T-cells protein 2 (Skint2).